The sequence spans 763 residues: Amine oxidase [copper-containing] 3 (763 aa).

Residues 2-6 lie on the Cytoplasmic side of the membrane; that stretch reads TQKTT. The helical; Signal-anchor for type II membrane protein transmembrane segment at 7–27 threads the bilayer; it reads LVLLALAVITIFALVCVLLAG. Over 28–763 the chain is Extracellular; that stretch reads RSGDGGRLSQ…AFSHGGFTYK (736 aa). Asn-137 is a glycosylation site (N-linked (GlcNAc...) asparagine). An intrachain disulfide couples Cys-198 to Cys-199. N-linked (GlcNAc...) asparagine glycans are attached at residues Asn-232 and Asn-294. Catalysis depends on Asp-386, which acts as the Proton acceptor. Cys-404 and Cys-430 are joined by a disulfide. Tyr-471 serves as the catalytic Schiff-base intermediate with substrate; via topaquinone. Tyr-471 is modified (2',4',5'-topaquinone). Positions 520 and 522 each coordinate Cu(2+). Asp-529, Leu-530, Asp-531, and Glu-572 together coordinate Ca(2+). 2 N-linked (GlcNAc...) asparagine glycosylation sites follow: Asn-581 and Asn-592. Positions 641 and 663 each coordinate Ca(2+). The N-linked (GlcNAc...) asparagine glycan is linked to Asn-666. Residues Glu-667, Asp-673, and Leu-674 each contribute to the Ca(2+) site. His-684 serves as a coordination point for Cu(2+). An intrachain disulfide couples Cys-734 to Cys-741.

Belongs to the copper/topaquinone oxidase family. Homodimer; disulfide-linked. Probably forms heterodimers with AOC2. Cu(2+) serves as cofactor. Ca(2+) is required as a cofactor. The cofactor is L-topaquinone. In terms of processing, topaquinone (TPQ) is generated by copper-dependent autoxidation of a specific tyrosyl residue. N- and O-glycosylated. As to expression, highly expressed in adipocytes, aorta and lung. Expressed at lower levels in heart, kidney, large intestine, liver, small intestine and stomach.

The protein resides in the cell membrane. The catalysed reaction is methylamine + O2 + H2O = formaldehyde + H2O2 + NH4(+). The enzyme catalyses benzylamine + O2 + H2O = benzaldehyde + H2O2 + NH4(+). It carries out the reaction 2-phenylethylamine + O2 + H2O = 2-phenylacetaldehyde + H2O2 + NH4(+). Catalyzes the oxidative deamination of primary amines to the corresponding aldehydes with the concomitant production of hydrogen peroxide and ammonia. Has a preference for the primary monoamines methylamine and benzylamine. Could also act on 2-phenylethylamine but much less efficiently. At endothelial cells surface can also function as a cell adhesion protein that participates in lymphocyte extravasation and recirculation by mediating the binding of lymphocytes to peripheral lymph node vascular endothelial cells in an L-selectin-independent fashion. This is Amine oxidase [copper-containing] 3 from Rattus norvegicus (Rat).